Here is a 106-residue protein sequence, read N- to C-terminus: MNDSEFHRLADALWLTIEERLDNWDGDSDIDCEINGGVLTLSFENGSKIIINRQEPLHQVWLATKQGGYHFDLKGDEWVCDRSGETFWDLLEQAATQQAGEKVSFR.

It belongs to the frataxin family.

Its function is as follows. Involved in iron-sulfur (Fe-S) cluster assembly. May act as a regulator of Fe-S biogenesis. The protein is Iron-sulfur cluster assembly protein CyaY of Salmonella dublin (strain CT_02021853).